The chain runs to 441 residues: Zinc finger protein ZIC 3 (441 aa).

The segment at 222 to 257 (LSCKWLEESPMNRPQKTCDRTFSSMHELVTHMTMEH) adopts a C2H2-type 1; atypical zinc-finger fold. The C2H2-type 2; atypical zinc-finger motif lies at 266-293 (HICYWEECPRGGKSFKAKYKLVNHIRVH). 3 C2H2-type zinc fingers span residues 299–323 (FPCPFPGCGKIFARSENLKIHKRTH), 329–353 (FKCEFEGCDRRFANSSDRKKHMHVH), and 359–381 (YICKVCDKSYTHPSSLRKHMKVH). The interval 375–441 (RKHMKVHESQ…LPPNFNEWYV (67 aa)) is disordered. Positions 383–399 (SQGSDSSPAASSGYESA) are enriched in low complexity. Positions 406–429 (SANSEEPSKNSSATHQTNNSSHNT) are enriched in polar residues.

The protein belongs to the GLI C2H2-type zinc-finger protein family.

The protein resides in the nucleus. Its subcellular location is the cytoplasm. Its function is as follows. Probably acts as a transcriptional activator. May bind to the minimal GLI-consensus sequence 5'-GGGTGGTC-3'. Can determine the ectodermal cell fate and promote the earliest step of neural and neural crest development. Involved in establishing left-right asymmetry in the embryo. The sequence is that of Zinc finger protein ZIC 3 (zic3) from Xenopus tropicalis (Western clawed frog).